Consider the following 305-residue polypeptide: Protein FdhE homolog (305 aa).

This sequence belongs to the FdhE family.

It is found in the cytoplasm. In terms of biological role, necessary for formate dehydrogenase activity. The protein is Protein FdhE homolog of Actinobacillus pleuropneumoniae serotype 7 (strain AP76).